A 185-amino-acid chain; its full sequence is ATP-dependent protease subunit HslV (185 aa).

Thr-12 is a catalytic residue. Residues Ala-168, Cys-171, and Thr-174 each coordinate Na(+).

This sequence belongs to the peptidase T1B family. HslV subfamily. As to quaternary structure, a double ring-shaped homohexamer of HslV is capped on each side by a ring-shaped HslU homohexamer. The assembly of the HslU/HslV complex is dependent on binding of ATP.

Its subcellular location is the cytoplasm. It catalyses the reaction ATP-dependent cleavage of peptide bonds with broad specificity.. Its activity is regulated as follows. Allosterically activated by HslU binding. In terms of biological role, protease subunit of a proteasome-like degradation complex believed to be a general protein degrading machinery. This Cereibacter sphaeroides (strain ATCC 17023 / DSM 158 / JCM 6121 / CCUG 31486 / LMG 2827 / NBRC 12203 / NCIMB 8253 / ATH 2.4.1.) (Rhodobacter sphaeroides) protein is ATP-dependent protease subunit HslV.